A 30-amino-acid chain; its full sequence is Trypsin inhibitor 3 (30 aa).

Pyrrolidone carboxylic acid is present on Q1. Intrachain disulfides connect C4–C21, C11–C23, and C17–C29.

The protein localises to the secreted. Its function is as follows. Inhibits trypsin; probably participates in a plant defense mechanism. In Momordica cochinchinensis (Spiny bitter cucumber), this protein is Trypsin inhibitor 3.